A 403-amino-acid polypeptide reads, in one-letter code: Anti-sigma-I factor RsgI8 (403 aa).

The Cytoplasmic segment spans residues 1–59; it reads MTKQKGTILKLKNNLAIIMTSDCKIVSIKRQPGMYEGLEISFNKNEIINKKNKLAFYSR. One can recognise a RsgI N-terminal anti-sigma domain in the interval 4–51; it reads QKGTILKLKNNLAIIMTSDCKIVSIKRQPGMYEGLEISFNKNEIINKK. The chain crosses the membrane as a helical span at residues 60 to 80; sequence IAAGIAAIFIIMVISFNLFNN. Residues 81–403 lie on the Extracellular side of the membrane; sequence NDVYAYVAID…KAKNSIEKMP (323 aa). Basic and acidic residues-rich tracts occupy residues 254–314, 324–335, and 349–403; these read VHNV…EPAK, LPKDKTIPEEKT, and VEPK…EKMP. Residues 254–403 are disordered; that stretch reads VHNVKKEEPK…KAKNSIEKMP (150 aa).

In terms of assembly, interacts (via RsgI N-terminal anti-sigma domain) with SigI8.

Its subcellular location is the cell membrane. Anti-sigma factor for SigI8. Negatively regulates SigI8 activity through direct interaction. The sequence is that of Anti-sigma-I factor RsgI8 from Acetivibrio thermocellus (strain ATCC 27405 / DSM 1237 / JCM 9322 / NBRC 103400 / NCIMB 10682 / NRRL B-4536 / VPI 7372) (Clostridium thermocellum).